Consider the following 776-residue polypeptide: Transcriptional regulator QRICH1 (776 aa).

Met-1 is subject to N-acetylmethionine. In terms of domain architecture, CARD spans Glu-6–Thr-48. Disordered stretches follow at residues Ile-139–Leu-164 and Ala-218–Ser-240. Ser-345 is modified (phosphoserine). Glycyl lysine isopeptide (Lys-Gly) (interchain with G-Cter in SUMO2) cross-links involve residues Lys-353 and Lys-358. Low complexity predominate over residues Gln-419–Glu-429. Residues Gln-419–Leu-441 are disordered. Ser-464 carries the post-translational modification Phosphoserine.

It is found in the nucleus. The protein localises to the cytoplasm. The protein resides in the cell membrane. Its function is as follows. Transcriptional regulator that acts as a mediator of the integrated stress response (ISR) through transcriptional control of protein homeostasis under conditions of ER stress. Controls the outcome of the unfolded protein response (UPR) which is an ER-stress response pathway. ER stress induces QRICH1 translation by a ribosome translation re-initiation mechanism in response to EIF2S1/eIF-2-alpha phosphorylation, and stress-induced QRICH1 regulates a transcriptional program associated with protein translation, protein secretion-mediated proteotoxicity and cell death during the terminal UPR. May cooperate with ATF4 transcription factor signaling to regulate ER homeostasis which is critical for cell viability. Up-regulates CASP3/caspase-3 activity in epithelial cells under ER stress. Central regulator of proteotoxicity associated with ER stress-mediated inflammatory diseases in the intestines and liver. Involved in chondrocyte hypertrophy, a process required for normal longitudinal bone growth. The polypeptide is Transcriptional regulator QRICH1 (Homo sapiens (Human)).